We begin with the raw amino-acid sequence, 440 residues long: ATP-dependent protease ATPase subunit HslU (440 aa).

ATP is bound by residues Val-18, 60-65 (GVGKTE), Asp-253, Glu-318, and Arg-390.

Belongs to the ClpX chaperone family. HslU subfamily. In terms of assembly, a double ring-shaped homohexamer of HslV is capped on each side by a ring-shaped HslU homohexamer. The assembly of the HslU/HslV complex is dependent on binding of ATP.

It localises to the cytoplasm. In terms of biological role, ATPase subunit of a proteasome-like degradation complex; this subunit has chaperone activity. The binding of ATP and its subsequent hydrolysis by HslU are essential for unfolding of protein substrates subsequently hydrolyzed by HslV. HslU recognizes the N-terminal part of its protein substrates and unfolds these before they are guided to HslV for hydrolysis. The protein is ATP-dependent protease ATPase subunit HslU of Methylococcus capsulatus (strain ATCC 33009 / NCIMB 11132 / Bath).